Consider the following 267-residue polypeptide: Pyridoxine/pyridoxamine 5'-phosphate oxidase (267 aa).

Substrate-binding positions include 20 to 23 (RQGY) and K80. FMN-binding positions include 75-80 (RTVLLK), 90-91 (YT), R96, K97, and Q119. 3 residues coordinate substrate: Y137, R141, and S145. FMN-binding positions include 154–155 (QS) and W200. 206–208 (RLH) lines the substrate pocket. Residue R210 participates in FMN binding.

It belongs to the pyridoxamine 5'-phosphate oxidase family. In terms of assembly, homodimer. FMN is required as a cofactor.

It catalyses the reaction pyridoxamine 5'-phosphate + O2 + H2O = pyridoxal 5'-phosphate + H2O2 + NH4(+). The catalysed reaction is pyridoxine 5'-phosphate + O2 = pyridoxal 5'-phosphate + H2O2. Its pathway is cofactor metabolism; pyridoxal 5'-phosphate salvage; pyridoxal 5'-phosphate from pyridoxamine 5'-phosphate: step 1/1. The protein operates within cofactor metabolism; pyridoxal 5'-phosphate salvage; pyridoxal 5'-phosphate from pyridoxine 5'-phosphate: step 1/1. Its function is as follows. Catalyzes the oxidation of either pyridoxine 5'-phosphate (PNP) or pyridoxamine 5'-phosphate (PMP) into pyridoxal 5'-phosphate (PLP). This Frankia casuarinae (strain DSM 45818 / CECT 9043 / HFP020203 / CcI3) protein is Pyridoxine/pyridoxamine 5'-phosphate oxidase.